Here is a 197-residue protein sequence, read N- to C-terminus: Holliday junction branch migration complex subunit RuvA (197 aa).

The domain I stretch occupies residues 1–64; that stretch reads MIASVRGVVQ…EDMLALFGFS (64 aa). The interval 65–143 is domain II; sequence SPAQRALFEL…VATISPQLST (79 aa). The segment at 144–153 is flexible linker; that stretch reads NPGLLALNTE. The tract at residues 153 to 197 is domain III; the sequence is ELIDILTSLGYSTTEAQAALNALPADAPADTEERLRLALQYFGGV.

This sequence belongs to the RuvA family. As to quaternary structure, homotetramer. Forms an RuvA(8)-RuvB(12)-Holliday junction (HJ) complex. HJ DNA is sandwiched between 2 RuvA tetramers; dsDNA enters through RuvA and exits via RuvB. An RuvB hexamer assembles on each DNA strand where it exits the tetramer. Each RuvB hexamer is contacted by two RuvA subunits (via domain III) on 2 adjacent RuvB subunits; this complex drives branch migration. In the full resolvosome a probable DNA-RuvA(4)-RuvB(12)-RuvC(2) complex forms which resolves the HJ.

It localises to the cytoplasm. In terms of biological role, the RuvA-RuvB-RuvC complex processes Holliday junction (HJ) DNA during genetic recombination and DNA repair, while the RuvA-RuvB complex plays an important role in the rescue of blocked DNA replication forks via replication fork reversal (RFR). RuvA specifically binds to HJ cruciform DNA, conferring on it an open structure. The RuvB hexamer acts as an ATP-dependent pump, pulling dsDNA into and through the RuvAB complex. HJ branch migration allows RuvC to scan DNA until it finds its consensus sequence, where it cleaves and resolves the cruciform DNA. In Herpetosiphon aurantiacus (strain ATCC 23779 / DSM 785 / 114-95), this protein is Holliday junction branch migration complex subunit RuvA.